Reading from the N-terminus, the 88-residue chain is uncharacterized protein (88 aa).

Residues 39 to 63 (CEECGAPIPQARREAIPGVRLCIHC) form a dksA C4-type zinc finger.

This is an uncharacterized protein from Escherichia coli (strain K12).